The sequence spans 240 residues: 2,3,4,5-tetrahydropyridine-2,6-dicarboxylate N-acetyltransferase (240 aa).

Belongs to the transferase hexapeptide repeat family. DapH subfamily.

It catalyses the reaction (S)-2,3,4,5-tetrahydrodipicolinate + acetyl-CoA + H2O = L-2-acetamido-6-oxoheptanedioate + CoA. It functions in the pathway amino-acid biosynthesis; L-lysine biosynthesis via DAP pathway; LL-2,6-diaminopimelate from (S)-tetrahydrodipicolinate (acetylase route): step 1/3. Its function is as follows. Catalyzes the transfer of an acetyl group from acetyl-CoA to tetrahydrodipicolinate. In Bacillus anthracis (strain A0248), this protein is 2,3,4,5-tetrahydropyridine-2,6-dicarboxylate N-acetyltransferase.